Reading from the N-terminus, the 493-residue chain is 3-octaprenyl-4-hydroxybenzoate carboxy-lyase (493 aa).

Asn-172 lines the Mn(2+) pocket. Prenylated FMN contacts are provided by residues Ile-175–Arg-177, Arg-189–Leu-191, and Arg-194–Gly-195. Mn(2+) is bound at residue Glu-238. Asp-287 serves as the catalytic Proton donor.

This sequence belongs to the UbiD family. As to quaternary structure, homohexamer. It depends on prenylated FMN as a cofactor. The cofactor is Mn(2+).

It localises to the cell membrane. The enzyme catalyses a 4-hydroxy-3-(all-trans-polyprenyl)benzoate + H(+) = a 2-(all-trans-polyprenyl)phenol + CO2. It functions in the pathway cofactor biosynthesis; ubiquinone biosynthesis. Functionally, catalyzes the decarboxylation of 3-octaprenyl-4-hydroxy benzoate to 2-octaprenylphenol, an intermediate step in ubiquinone biosynthesis. This Cellvibrio japonicus (strain Ueda107) (Pseudomonas fluorescens subsp. cellulosa) protein is 3-octaprenyl-4-hydroxybenzoate carboxy-lyase.